We begin with the raw amino-acid sequence, 429 residues long: FAD-dependent monooxygenase azaH (429 aa).

Residues 5–25 (SIEVAIIGAGITGITLALGLL) traverse the membrane as a helical segment. Glu35 and Gly48 together coordinate FAD. Residues Asn75 and Asn87 are each glycosylated (N-linked (GlcNAc...) asparagine). Position 116 (Arg116) interacts with FAD. Arg199 is an active-site residue. FAD-binding residues include Asp315 and Ala328.

The protein belongs to the paxM FAD-dependent monooxygenase family. FAD serves as cofactor.

It is found in the membrane. It participates in secondary metabolite biosynthesis. FAD-dependent monooxygenase; part of the gene cluster that mediates the biosynthesis of azaphilones, a class of fungal metabolites characterized by a highly oxygenated pyrano-quinone bicyclic core and exhibiting a broad range of bioactivities. In the first step, the non-reducing polyketide synthase azaA forms the hexaketide precursor from successive condensations of five malonyl-CoA units, presumably with a simple acetyl-CoA starter unit. The reactive polyketide chain then undergoes a PT-mediated C2-C7 cyclization to afford the aromatic ring and is eventually released as an aldehyde through the R-domain. The putative ketoreductase azaE is proposed to catalyze the reduction of the terminal ketone resulting in the early culture product FK17-P2a. The monooxygenase azaH was demonstrated to be the only enzyme required to convert FK17-P2a to azanigerone E. AzaH first hydroxylates the benzaldehyde intermediate FK17-P2a at C4, which triggers the formation of the pyran-ring to afford azanigerone E. In parallel, the 2,4-dimethylhexanoyl chain is synthesized by the HR-PKS azaB and is proposed to be transferred to the C4-hydroxyl of azanigerone E by the acyltransferase azaD directly from the ACP domain of azaB. Alternatively, the 2,4-dimethyl-hexanoyl chain may be offloaded from the HR-PKS as a carboxylic acid and converted to an acyl-CoA by azaF. The resulting acyl-CoA molecule could then be taken up as a substrate by AzaD to form azanigerone B. To yield the carboxylic acid substituent in azanigerone A, the hydroxypropyl side chain of azanigerone B would need to undergo a C-C oxidative cleavage catalyzed by cytochrome P450 AzaI. AzaI is proposed to act on a vicinal diol that leads to a C-C bond scission either through an alkoxyradical intermediate or a peroxy complex. In the biosynthesis of azanigerone A, azanigerone B first undergoes hydroxylation at C10, possibly catalyzed by one of the two FAD-dependent monooxygenases encoded in the cluster, azaG or azaL, resulting in the vicinal diol azanigerone C. Oxidative cleavage of azanigerone C by azaI would yield the corresponding aldehyde derivative of azanigerone A. Finally, the dehydrogenase azaJ is proposed to convert the aldehyde functional group into the carboxylic acid, completing the conversion from azanigerone B to azanigerone A. Alternatively, the oxidation of aldehyde to carboxylic acid may be catalyzed by the same P450 enzyme azaI via consecutive oxidation or by endogenous alcohol dehydrogenase. This is FAD-dependent monooxygenase azaH from Aspergillus niger (strain ATCC 1015 / CBS 113.46 / FGSC A1144 / LSHB Ac4 / NCTC 3858a / NRRL 328 / USDA 3528.7).